Here is a 438-residue protein sequence, read N- to C-terminus: MFKFAALLALASLVPGFVQAQSPVWGQCGGNGWTGPTTCASGSTCVKQNDFYSQCLPNNQAPPSTTTQPGTTPPATTTSGGTGPTSGAGNPYTGKTVWLSPFYADEVAQAAADISNPSLATKAASVAKIPTFVWFDTVAKVPDLGGYLADARSKNQLVQIVVYDLPDRDCAALASNGEFSLANDGLNKYKNYVDQIAAQIKQFPDVSVVAVIEPDSLANLVTNLNVQKCANAQSAYKEGVIYAVQKLNAVGVTMYIDAGHAGWLGWPANLSPAAQLFAQIYRDAGSPRNLRGIATNVANFNALRASSPDPITQGNSNYDEIHYIEALAPMLSNAGFPAHFIVDQGRSGVQNIRDQWGDWCNVKGAGFGQRPTTNTGSSLIDAIVWVKPGGECDGTSDNSSPRFDSHCSLSDAHQPAPEAGTWFQAYFETLVANANPAL.

A signal peptide spans 1–20; the sequence is MFKFAALLALASLVPGFVQA. The CBM1 domain maps to 21-59; it reads QSPVWGQCGGNGWTGPTTCASGSTCVKQNDFYSQCLPNN. Cystine bridges form between Cys-28/Cys-45 and Cys-39/Cys-55. The interval 57–90 is disordered; sequence PNNQAPPSTTTQPGTTPPATTTSGGTGPTSGAGN. A linker region spans residues 60–87; it reads QAPPSTTTQPGTTPPATTTSGGTGPTSG. Residues 61 to 79 are compositionally biased toward low complexity; it reads APPSTTTQPGTTPPATTTS. The tract at residues 88 to 438 is catalytic; sequence AGNPYTGKTV…TLVANANPAL (351 aa). 2 cysteine pairs are disulfide-bonded: Cys-170–Cys-229 and Cys-360–Cys-407. Asp-215 (proton donor) is an active-site residue. Asp-393 functions as the Nucleophile in the catalytic mechanism.

Belongs to the glycosyl hydrolase 6 (cellulase B) family.

The enzyme catalyses Hydrolysis of (1-&gt;4)-beta-D-glucosidic linkages in cellulose and cellotetraose, releasing cellobiose from the non-reducing ends of the chains.. Shows enzymatic activity towards crystalline cellulose. At long reaction times. It is also able to degrade carboxymethyl cellulose and barley B-glucan. The sequence is that of Exoglucanase 3 (cel3) from Agaricus bisporus (White button mushroom).